Here is a 204-residue protein sequence, read N- to C-terminus: Proteasome subunit beta 2 (204 aa).

Residues 1-6 constitute a propeptide, removed in mature form; by autocatalysis; it reads MEVLPG. The active-site Nucleophile is Thr7.

The protein belongs to the peptidase T1B family. The 20S proteasome core is composed of 14 alpha and 14 beta subunits that assemble into four stacked heptameric rings, resulting in a barrel-shaped structure. The two inner rings, each composed of seven catalytic beta subunits, are sandwiched by two outer rings, each composed of seven alpha subunits. The catalytic chamber with the active sites is on the inside of the barrel. Has a gated structure, the ends of the cylinder being occluded by the N-termini of the alpha-subunits. Is capped at one or both ends by the proteasome regulatory ATPase, PAN.

The protein resides in the cytoplasm. The catalysed reaction is Cleavage of peptide bonds with very broad specificity.. The formation of the proteasomal ATPase PAN-20S proteasome complex, via the docking of the C-termini of PAN into the intersubunit pockets in the alpha-rings, triggers opening of the gate for substrate entry. Interconversion between the open-gate and close-gate conformations leads to a dynamic regulation of the 20S proteasome proteolysis activity. Component of the proteasome core, a large protease complex with broad specificity involved in protein degradation. The protein is Proteasome subunit beta 2 of Thermofilum pendens (strain DSM 2475 / Hrk 5).